A 693-amino-acid chain; its full sequence is MA3 DOMAIN-CONTAINING TRANSLATION REGULATORY FACTOR 2 (693 aa).

Positions 25 to 60 (SLDPLPQANMAEDLTKSRRHSPIKVEGSEETWGVED) are disordered. The 122-residue stretch at 90 to 211 (EYKKKATVIV…PPAFLKKQMK (122 aa)) folds into the MI 1 domain. Positions 241 to 248 (EKRWGGTD) match the Nuclear localization signal 1 motif. MI domains lie at 254–375 (DVKA…SLSA), 389–510 (VFKD…EVLN), and 560–681 (EVKE…EDSQ). The Nuclear localization signal 2 motif lies at 430–437 (VKYLITLA). The disordered stretch occupies residues 673–693 (ESFASEDSQSKKQNGSSSSSG). The segment covering 683–693 (KKQNGSSSSSG) has biased composition (low complexity).

Belongs to the PDCD4 family. As to quaternary structure, binds to EIF4A1. The association with ribosomes is modulated by cellular energy status and TOR activity. In terms of tissue distribution, mostly expressed in reproductive tissues, such as flower buds and flowers, and, to a lower extent, in vegetative tissues, such as leaves, roots and stems.

It localises to the nucleus. The protein resides in the cytoplasm. Its subcellular location is the cytosol. Involved in target of rapamycin (TOR)-regulated translation control, especially under energy-deficient conditions. This Arabidopsis thaliana (Mouse-ear cress) protein is MA3 DOMAIN-CONTAINING TRANSLATION REGULATORY FACTOR 2.